The chain runs to 477 residues: Probable cytosolic Fe-S cluster assembly factor CG17683 (477 aa).

[4Fe-4S] cluster-binding residues include C23, C68, C71, C74, C187, C243, C395, and C399.

Belongs to the NARF family.

In terms of biological role, component of the cytosolic iron-sulfur (Fe/S) protein assembly machinery. Required for maturation of extramitochondrial Fe/S proteins. The chain is Probable cytosolic Fe-S cluster assembly factor CG17683 from Drosophila melanogaster (Fruit fly).